A 336-amino-acid chain; its full sequence is CMP-sialic acid transporter (336 aa).

The Cytoplasmic portion of the chain corresponds to 1–9 (MAPARENVS). Residues 10–30 (LFFKLYCLTVMTLVAAAYTVA) traverse the membrane as a helical segment. Residues 31–45 (LRYTRTTAEELYFST) lie on the Lumenal side of the membrane. The helical transmembrane segment at 46 to 64 (TAVCITEVIKLLISVGLLA) threads the bilayer. Residue lysine 55 coordinates CMP-N-acetyl-beta-neuraminate. Topologically, residues 65–87 (KETGSLGRFKASLSENVLGSPKE) are cytoplasmic. A helical membrane pass occupies residues 88-108 (LAKLSVPSLVYAVQNNMAFLA). 101–102 (QN) contacts CMP-N-acetyl-beta-neuraminate. Residues 109–114 (LSNLDA) lie on the Lumenal side of the membrane. A helical transmembrane segment spans residues 115–135 (AVYQVTYQLKIPCTALCTVLM). Residue 117–124 (YQVTYQLK) participates in CMP-N-acetyl-beta-neuraminate binding. At 136–141 (LNRTLS) the chain is on the cytoplasmic side. Residues 142–160 (KLQWISVFMLCGGVTLVQW) traverse the membrane as a helical segment. Residues 161–175 (KPAQATKVVVAQNPL) lie on the Lumenal side of the membrane. A helical membrane pass occupies residues 176 to 196 (LGFGAIAIAVLCSGFAGVYFE). CMP-N-acetyl-beta-neuraminate is bound at residue serine 188. Residues 197 to 209 (KVLKSSDTSLWVR) are Cytoplasmic-facing. CMP-N-acetyl-beta-neuraminate is bound at residue 210-214 (NIQMY). Residues 210–228 (NIQMYLSGIVVTLAGTYLS) traverse the membrane as a helical segment. Topologically, residues 229–243 (DGAEIQEKGFFYGYT) are lumenal. A helical transmembrane segment spans residues 244–262 (YYVWFVIFLASVGGLYTSV). At 263 to 269 (VVKYTDN) the chain is on the cytoplasmic side. A helical membrane pass occupies residues 270–288 (IMKGFSAAAAIVLSTIASV). Lysine 272 lines the CMP-N-acetyl-beta-neuraminate pocket. Over 289–296 (LLFGLQIT) the chain is Lumenal. Residues 297–315 (LSFALGALLVCVSIYLYGL) form a helical membrane-spanning segment. The Cytoplasmic portion of the chain corresponds to 316-336 (PRQDTTSIQQEATSKERIIGV). The interval 316–336 (PRQDTTSIQQEATSKERIIGV) is disordered.

It belongs to the nucleotide-sugar transporter family. SLC35A subfamily. In terms of assembly, monomer. In terms of tissue distribution, ubiquitous. Found in all the tissues examined including skeletal muscle, brain, heart, liver, kidney and spleen.

Its subcellular location is the golgi apparatus membrane. It catalyses the reaction CMP-N-acetyl-beta-neuraminate(in) + CMP(out) = CMP-N-acetyl-beta-neuraminate(out) + CMP(in). The catalysed reaction is CMP-N-acetyl-beta-neuraminate(in) + AMP(out) = CMP-N-acetyl-beta-neuraminate(out) + AMP(in). The enzyme catalyses CDP-L-ribitol(in) + CDP(out) = CDP-L-ribitol(out) + CDP(in). It carries out the reaction UMP(out) + CMP-N-acetyl-beta-neuraminate(in) = UMP(in) + CMP-N-acetyl-beta-neuraminate(out). Functionally, transports CMP-sialic acid from the cytosol into the Golgi apparatus, functioning as an antiporter that exchanges CMP-sialic acid for CMP. Binds both CMP-sialic acid and free CMP, but has higher affinity for free CMP. Also able to exchange CMP-sialic acid for AMP and UMP. Also mediates the transport of CDP-ribitol. The chain is CMP-sialic acid transporter from Mus musculus (Mouse).